Reading from the N-terminus, the 318-residue chain is Ornithine carbamoyltransferase (318 aa).

Carbamoyl phosphate contacts are provided by residues 63-66, Gln-90, Arg-114, and 141-144; these read STRT and HPCQ. Residues Asn-172, Asp-235, and 239 to 240 contribute to the L-ornithine site; that span reads SM. Residues 275 to 276 and Arg-303 each bind carbamoyl phosphate; that span reads CL.

It belongs to the aspartate/ornithine carbamoyltransferase superfamily. OTCase family.

The protein localises to the cytoplasm. The catalysed reaction is carbamoyl phosphate + L-ornithine = L-citrulline + phosphate + H(+). It participates in amino-acid biosynthesis; L-arginine biosynthesis; L-arginine from L-ornithine and carbamoyl phosphate: step 1/3. Reversibly catalyzes the transfer of the carbamoyl group from carbamoyl phosphate (CP) to the N(epsilon) atom of ornithine (ORN) to produce L-citrulline. This is Ornithine carbamoyltransferase from Prochlorococcus marinus (strain SARG / CCMP1375 / SS120).